We begin with the raw amino-acid sequence, 230 residues long: Orotidine 5'-phosphate decarboxylase (230 aa).

Substrate-binding positions include Asp11, Lys34, 61 to 70 (DLKLHDIPNT), Thr117, Arg179, Gln188, Gly208, and Arg209. Lys63 acts as the Proton donor in catalysis.

It belongs to the OMP decarboxylase family. Type 1 subfamily. In terms of assembly, homodimer.

The enzyme catalyses orotidine 5'-phosphate + H(+) = UMP + CO2. It functions in the pathway pyrimidine metabolism; UMP biosynthesis via de novo pathway; UMP from orotate: step 2/2. Functionally, catalyzes the decarboxylation of orotidine 5'-monophosphate (OMP) to uridine 5'-monophosphate (UMP). The protein is Orotidine 5'-phosphate decarboxylase of Streptococcus uberis (strain ATCC BAA-854 / 0140J).